The primary structure comprises 188 residues: Probable manganese efflux pump MntP (188 aa).

Transmembrane regions (helical) follow at residues 3–23 (ITATVLLAFGMSMDAFAASIG), 66–86 (LEWNHWIAFVLLIFLGGRMII), 106–128 (WLLVTTAIATSLDAMAVGVGLAF), 143–163 (ATLIMSTLGMMVGRFIGSIIG), and 168–188 (ILGGLVLIGIGVQILWTHFHG).

Belongs to the MntP (TC 9.B.29) family.

It is found in the cell inner membrane. Its function is as follows. Probably functions as a manganese efflux pump. The protein is Probable manganese efflux pump MntP of Escherichia coli O139:H28 (strain E24377A / ETEC).